The sequence spans 191 residues: Large ribosomal subunit protein uL22 (191 aa).

Positions 159–168 are enriched in basic and acidic residues; sequence VPKGEDDTAQ. Residues 159-191 form a disordered region; it reads VPKGEDDTAQKKKVSQKKLKKQKLKAALSGGAD. Residues 169–182 are compositionally biased toward basic residues; the sequence is KKKVSQKKLKKQKL.

It belongs to the universal ribosomal protein uL22 family.

This Suberites domuncula (Sponge) protein is Large ribosomal subunit protein uL22 (RPL17).